The chain runs to 65 residues: uncharacterized protein (65 aa).

The protein resides in the plastid. The protein localises to the chloroplast. This is an uncharacterized protein from Porphyra purpurea (Red seaweed).